The chain runs to 315 residues: MSSPEVGKKIIVTVPSTTANLGPGFDCLGAALDLYNEFIFTRIDGGRDRFDLIMESTDGNHLRGGPENLVFRAAQKVWESANIKPFALEARVKLAVPPARGLGSSATAIVAGLIGANAIMNSPLPKEKLLELAIDIEGHPDNVVPSLLGGLCLTARSSSQRWRIIRCDWHDSIKTVVAIPAIRLSTSEARRVMPKNVPISDAVTNMGALTLLLNGLKTGNDELIKEGMFDKLHEPYRWKLIKGGLEVKDAALQAGALGCAISGAGPSILALCKKDKGREVSQAMVKAWENSGVASRAPYLNVQTTGSQFRDISGK.

97 to 107 (PPARGLGSSAT) contributes to the ATP binding site.

Belongs to the GHMP kinase family. Homoserine kinase subfamily.

Its subcellular location is the cytoplasm. The enzyme catalyses L-homoserine + ATP = O-phospho-L-homoserine + ADP + H(+). Its pathway is amino-acid biosynthesis; L-threonine biosynthesis; L-threonine from L-aspartate: step 4/5. In terms of biological role, catalyzes the ATP-dependent phosphorylation of L-homoserine to L-homoserine phosphate. In Prochlorococcus marinus subsp. pastoris (strain CCMP1986 / NIES-2087 / MED4), this protein is Homoserine kinase.